The following is a 360-amino-acid chain: UDP-N-acetylglucosamine--N-acetylmuramyl-(pentapeptide) pyrophosphoryl-undecaprenol N-acetylglucosamine transferase (360 aa).

UDP-N-acetyl-alpha-D-glucosamine contacts are provided by residues 16–18, Asn128, Arg165, Ser191, Ile247, 266–271, and Gln292; these read TGG and ALTVSE.

Belongs to the glycosyltransferase 28 family. MurG subfamily.

The protein resides in the cell inner membrane. The enzyme catalyses di-trans,octa-cis-undecaprenyl diphospho-N-acetyl-alpha-D-muramoyl-L-alanyl-D-glutamyl-meso-2,6-diaminopimeloyl-D-alanyl-D-alanine + UDP-N-acetyl-alpha-D-glucosamine = di-trans,octa-cis-undecaprenyl diphospho-[N-acetyl-alpha-D-glucosaminyl-(1-&gt;4)]-N-acetyl-alpha-D-muramoyl-L-alanyl-D-glutamyl-meso-2,6-diaminopimeloyl-D-alanyl-D-alanine + UDP + H(+). It participates in cell wall biogenesis; peptidoglycan biosynthesis. Its function is as follows. Cell wall formation. Catalyzes the transfer of a GlcNAc subunit on undecaprenyl-pyrophosphoryl-MurNAc-pentapeptide (lipid intermediate I) to form undecaprenyl-pyrophosphoryl-MurNAc-(pentapeptide)GlcNAc (lipid intermediate II). This chain is UDP-N-acetylglucosamine--N-acetylmuramyl-(pentapeptide) pyrophosphoryl-undecaprenol N-acetylglucosamine transferase, found in Shewanella amazonensis (strain ATCC BAA-1098 / SB2B).